Consider the following 267-residue polypeptide: tRNA pseudouridine synthase A (267 aa).

Residue Asp55 is the Nucleophile of the active site. Residue Tyr111 participates in substrate binding.

Belongs to the tRNA pseudouridine synthase TruA family.

The enzyme catalyses uridine(38/39/40) in tRNA = pseudouridine(38/39/40) in tRNA. In terms of biological role, formation of pseudouridine at positions 38, 39 and 40 in the anticodon stem and loop of transfer RNAs. This chain is tRNA pseudouridine synthase A, found in Thermococcus kodakarensis (strain ATCC BAA-918 / JCM 12380 / KOD1) (Pyrococcus kodakaraensis (strain KOD1)).